A 124-amino-acid polypeptide reads, in one-letter code: MADLKAFAEQLVNLTVKEVNELATILKEEYGIEPAAAAVAVAAGPAAGAAAAEEKTSFDVVLKSAGAAKLQVVKAVKEACGLGLKEAKDMVDGAPSTVKEGLAKDEAESLKKTLEEAGAEVELK.

This sequence belongs to the bacterial ribosomal protein bL12 family. Homodimer. Part of the ribosomal stalk of the 50S ribosomal subunit. Forms a multimeric L10(L12)X complex, where L10 forms an elongated spine to which 2 to 4 L12 dimers bind in a sequential fashion. Binds GTP-bound translation factors.

Its function is as follows. Forms part of the ribosomal stalk which helps the ribosome interact with GTP-bound translation factors. Is thus essential for accurate translation. The polypeptide is Large ribosomal subunit protein bL12 (Phocaeicola vulgatus (strain ATCC 8482 / DSM 1447 / JCM 5826 / CCUG 4940 / NBRC 14291 / NCTC 11154) (Bacteroides vulgatus)).